A 333-amino-acid chain; its full sequence is L-asparagine oxygenase (333 aa).

L-asparagine is bound by residues Glu125 and Asn146. Positions 155 and 157 each coordinate Fe cation. L-asparagine contacts are provided by Glu157 and Asn158. A Fe cation-binding site is contributed by His287. Arg301 serves as a coordination point for 2-oxoglutarate. Arg305 is an L-asparagine binding site.

It belongs to the clavaminate synthase family. Requires Fe(2+) as cofactor.

It carries out the reaction L-asparagine + 2-oxoglutarate + O2 = (2S,3S)-3-hydroxyasparagine + succinate + CO2. It functions in the pathway antibiotic biosynthesis; calcium-dependent antibiotic biosynthesis. In terms of biological role, catalyzes the 3-hydroxylation of L-asparagine to (2S,3S)-3-hydroxyasparagine. The 3-hydroxylated asparagine produced is incorporated at position 9 during the biosynthesis of the non-ribosomally synthesized calcium-dependent antibiotic (CDA), a 11-residue acidic lipopeptide lactone. Is able to hydroxylate only free L-asparagine, since it hydroxylates neither a CDA analog with unmodified Asn at position 9 nor a peptidyl-carrier-protein (PCP)-bound asparagine. Is not active toward D-asparagine. In Streptomyces coelicolor (strain ATCC BAA-471 / A3(2) / M145), this protein is L-asparagine oxygenase (asnO).